The primary structure comprises 48 residues: Sperm protamine P1 (48 aa).

It belongs to the protamine P1 family. As to quaternary structure, cross-linked by interchain disulfide bonds around the DNA-helix. As to expression, testis.

It is found in the nucleus. It localises to the chromosome. In terms of biological role, protamines substitute for histones in the chromatin of sperm during the haploid phase of spermatogenesis. They compact sperm DNA into a highly condensed, stable and inactive complex. The chain is Sperm protamine P1 (PRM1) from Cavia porcellus (Guinea pig).